The chain runs to 45 residues: MSKRTFQPNNRKKAKKHGFRLRMRTRAGRAILAARRGKGRTELSA.

The protein belongs to the bacterial ribosomal protein bL34 family.

This is Large ribosomal subunit protein bL34 from Clavibacter michiganensis subsp. michiganensis (strain NCPPB 382).